Reading from the N-terminus, the 363-residue chain is 3-dehydroquinate synthase (363 aa).

NAD(+)-binding positions include 109–113 (GASTD), 133–134 (TT), K146, and K155. The Zn(2+) site is built by E188, H251, and H267.

The protein belongs to the sugar phosphate cyclases superfamily. Dehydroquinate synthase family. It depends on NAD(+) as a cofactor. Co(2+) serves as cofactor. The cofactor is Zn(2+).

It localises to the cytoplasm. The catalysed reaction is 7-phospho-2-dehydro-3-deoxy-D-arabino-heptonate = 3-dehydroquinate + phosphate. It functions in the pathway metabolic intermediate biosynthesis; chorismate biosynthesis; chorismate from D-erythrose 4-phosphate and phosphoenolpyruvate: step 2/7. Catalyzes the conversion of 3-deoxy-D-arabino-heptulosonate 7-phosphate (DAHP) to dehydroquinate (DHQ). The polypeptide is 3-dehydroquinate synthase (Streptomyces coelicolor (strain ATCC BAA-471 / A3(2) / M145)).